The following is a 590-amino-acid chain: Cytosolic Fe-S cluster assembly factor nar1 (590 aa).

Positions 20, 62, 65, 68, 214, 269, 456, and 460 each coordinate [4Fe-4S] cluster.

The protein belongs to the NARF family.

Component of the cytosolic Fe/S protein assembly machinery. Required for maturation of extramitochondrial Fe/S proteins. May play a role in the transfer of pre-assembled Fe/S clusters to target apoproteins. This is Cytosolic Fe-S cluster assembly factor nar1 (nar1) from Talaromyces marneffei (strain ATCC 18224 / CBS 334.59 / QM 7333) (Penicillium marneffei).